Here is a 101-residue protein sequence, read N- to C-terminus: ATP synthase subunit f, mitochondrial (101 aa).

The transit peptide at 1 to 6 directs the protein to the mitochondrion; it reads MIFKRA.

This sequence belongs to the ATPase F chain family. As to quaternary structure, F-type ATPases have 2 components, CF(1) - the catalytic core - and CF(0) - the membrane proton channel. In yeast, the dimeric form of ATP synthase consists of 17 polypeptides: alpha, beta, gamma, delta, epsilon, 4 (B), 5 (OSCP), 6 (A), 8, 9 (C), d, E (Tim11), f, g, h, i/j and k.

The protein resides in the mitochondrion. Its subcellular location is the mitochondrion inner membrane. Mitochondrial membrane ATP synthase (F(1)F(0) ATP synthase or Complex V) produces ATP from ADP in the presence of a proton gradient across the membrane which is generated by electron transport complexes of the respiratory chain. F-type ATPases consist of two structural domains, F(1) - containing the extramembraneous catalytic core and F(0) - containing the membrane proton channel, linked together by a central stalk and a peripheral stalk. During catalysis, ATP synthesis in the catalytic domain of F(1) is coupled via a rotary mechanism of the central stalk subunits to proton translocation. Part of the complex F(0) domain. Minor subunit located with subunit a in the membrane. The polypeptide is ATP synthase subunit f, mitochondrial (ATP17) (Saccharomyces cerevisiae (strain ATCC 204508 / S288c) (Baker's yeast)).